We begin with the raw amino-acid sequence, 1074 residues long: Phospholipase D1 (1074 aa).

Residues 81-212 (IKAQVLEVER…TEFLDISQLS (132 aa)) form the PX domain. The PH domain occupies 219-328 (PKGIEGMIMK…WGGAIEEFIQ (110 aa)). Residues Cys-240 and Cys-241 are each lipidated (S-palmitoyl cysteine). The PLD phosphodiesterase 1 domain maps to 459–486 (YLWAHHEKLVIIDQSVAFVGGIDLAYGR). Residues 463–928 (HHEKLVIIDQ…MLGKRDSEMA (466 aa)) are catalytic. A phosphoserine mark is found at Ser-499, Ser-561, and Ser-629. Residues 891–918 (ELIYVHSKLLIADDNTVIIGSANINDRS) enclose the PLD phosphodiesterase 2 domain.

This sequence belongs to the phospholipase D family. Interacts with PIP5K1B. Expressed abundantly in the pancreas and heart and at high levels in brain, placenta, spleen, uterus and small intestine.

It localises to the cytoplasm. The protein resides in the perinuclear region. It is found in the endoplasmic reticulum membrane. The protein localises to the golgi apparatus membrane. Its subcellular location is the late endosome membrane. It carries out the reaction a 1,2-diacyl-sn-glycero-3-phosphocholine + H2O = a 1,2-diacyl-sn-glycero-3-phosphate + choline + H(+). The catalysed reaction is ethanol + a 1,2-diacyl-sn-glycero-3-phosphocholine = 1,2-diacyl-sn-glycero-3-phosphoethanol + choline. The enzyme catalyses 1,2-dihexadecanoyl-sn-glycero-3-phosphocholine + H2O = 1,2-dihexadecanoyl-sn-glycero-3-phosphate + choline + H(+). Stimulated by phosphatidylinositol 4,5-bisphosphate and phosphatidylinositol 3,4,5-trisphosphate, activated by the phosphokinase C-alpha, by the ADP-ribosylation factor-1 (ARF-1), and to a lesser extent by GTP-binding proteins: RHO A, RAC-1 and CDC42. Inhibited by oleate. Function as phospholipase selective for phosphatidylcholine. Implicated as a critical step in numerous cellular pathways, including signal transduction, membrane trafficking, and the regulation of mitosis. May be involved in the regulation of perinuclear intravesicular membrane traffic. This chain is Phospholipase D1, found in Homo sapiens (Human).